A 139-amino-acid polypeptide reads, in one-letter code: MRHARGYRRLNRTHEHRKALFANMAGSLIEHEQIKTTLPKAKELRPIIEKLVTLAKRGDLHARRQAAAQLKEDRHVERLFAILGPRYAERAGGYVRVLKAGFRYGDMAPMAIIEFVDRDPNAKGAADKARVLAEEALED.

It belongs to the bacterial ribosomal protein bL17 family. Part of the 50S ribosomal subunit. Contacts protein L32.

This Cereibacter sphaeroides (strain ATCC 17025 / ATH 2.4.3) (Rhodobacter sphaeroides) protein is Large ribosomal subunit protein bL17.